The sequence spans 421 residues: MTNLLEDLSFRGLIQQMTDEEGLNKQLNEEKIRLYSGFDPTADSLHIGHLLPILTLRRFQLAGHHPIALVGGATGLIGDPSGKKAERTLNTQDIVVEWSQKIKNQLSRFLDFEAGENPAVIANNFDWIGKLSIIEFLRDVGKNFGINYMLAKDTVSSRIETGISYTEFSYMILQSYDFLNLYREKNCKLQIGGSDQWGNITAGLELIRKSEEEGAKAFGLTIPLVTKADGTKFGKTEGGAIWLDKEKTSPYEFYQFWINTDDRDVVKYLKYFTFLSKEEIEAYAEKTETAPEKREAQKRLAEEVTVLVHGREALEQAVHISQALFSGNIKELSAQDVKVGFKDVPSFEKDRSEELSLVDVLVESKLSPSKRQAREDIQNGAVYINGERQTDIGHLLTAEDRIEDQFTVLRRGKKKYFLITY.

An L-tyrosine-binding site is contributed by Y35. Positions 40–49 (PTADSLHIGH) match the 'HIGH' region motif. Residues Y170 and Q174 each contribute to the L-tyrosine site. The short motif at 232–236 (KFGKT) is the 'KMSKS' region element. K235 is an ATP binding site. Residues 355-421 (LSLVDVLVES…GKKKYFLITY (67 aa)) form the S4 RNA-binding domain.

The protein belongs to the class-I aminoacyl-tRNA synthetase family. TyrS type 1 subfamily. As to quaternary structure, homodimer.

It is found in the cytoplasm. It carries out the reaction tRNA(Tyr) + L-tyrosine + ATP = L-tyrosyl-tRNA(Tyr) + AMP + diphosphate + H(+). Its function is as follows. Catalyzes the attachment of tyrosine to tRNA(Tyr) in a two-step reaction: tyrosine is first activated by ATP to form Tyr-AMP and then transferred to the acceptor end of tRNA(Tyr). The chain is Tyrosine--tRNA ligase from Bacillus velezensis (strain DSM 23117 / BGSC 10A6 / LMG 26770 / FZB42) (Bacillus amyloliquefaciens subsp. plantarum).